A 178-amino-acid polypeptide reads, in one-letter code: ATP synthase subunit delta (178 aa).

The protein belongs to the ATPase delta chain family. In terms of assembly, F-type ATPases have 2 components, F(1) - the catalytic core - and F(0) - the membrane proton channel. F(1) has five subunits: alpha(3), beta(3), gamma(1), delta(1), epsilon(1). F(0) has three main subunits: a(1), b(2) and c(10-14). The alpha and beta chains form an alternating ring which encloses part of the gamma chain. F(1) is attached to F(0) by a central stalk formed by the gamma and epsilon chains, while a peripheral stalk is formed by the delta and b chains.

It is found in the cell membrane. Functionally, f(1)F(0) ATP synthase produces ATP from ADP in the presence of a proton or sodium gradient. F-type ATPases consist of two structural domains, F(1) containing the extramembraneous catalytic core and F(0) containing the membrane proton channel, linked together by a central stalk and a peripheral stalk. During catalysis, ATP synthesis in the catalytic domain of F(1) is coupled via a rotary mechanism of the central stalk subunits to proton translocation. Its function is as follows. This protein is part of the stalk that links CF(0) to CF(1). It either transmits conformational changes from CF(0) to CF(1) or is implicated in proton conduction. This chain is ATP synthase subunit delta, found in Desulfitobacterium hafniense (strain Y51).